The following is a 409-amino-acid chain: 3-isopropylmalate dehydrogenase 1, chloroplastic (409 aa).

Residues 1-37 (MAAFLQTNISLNAIKIVPGKYSSLTDHQFRAPYRIRC) constitute a chloroplast transit peptide. Phosphoserine is present on serine 74. 118 to 133 (IGGYKWDKNEKHLRPE) serves as a coordination point for NAD(+). The substrate site is built by arginine 140, arginine 150, and arginine 178. Asparagine 238 contributes to the NAD(+) binding site. Position 268 (aspartate 268) interacts with substrate. Aspartate 268 contributes to the Mg(2+) binding site. Asparagine 269 serves as a coordination point for NAD(+). Residues aspartate 292 and aspartate 296 each coordinate Mg(2+). NAD(+) is bound at residue 322-338 (EPIHGSAPDIAGQDKAN).

The protein belongs to the isocitrate and isopropylmalate dehydrogenases family. Homodimer. Mg(2+) is required as a cofactor. It depends on Mn(2+) as a cofactor. In terms of tissue distribution, highly expressed in seedlings, leaves, stems and roots and, to a lower extent, in flowers, pollen and siliques.

It localises to the plastid. It is found in the chloroplast stroma. It carries out the reaction (2R,3S)-3-isopropylmalate + NAD(+) = 4-methyl-2-oxopentanoate + CO2 + NADH. The protein operates within amino-acid biosynthesis; L-leucine biosynthesis; L-leucine from 3-methyl-2-oxobutanoate: step 3/4. It functions in the pathway secondary metabolite biosynthesis. Regulated by a thiol-based redox modification; oxidation by CuCl(2) leads to a decreased activity. In terms of biological role, involved in both glucosinolate and leucine biosynthesis; catalyzes the oxidative decarboxylation step in both leucine biosynthesis (primary metabolism) and methionine chain elongation of glucosinolates (specialized metabolism). Catalyzes the oxidation of 3-carboxy-2-hydroxy-4-methylpentanoate (3-isopropylmalate, 3-IPM) to 3-carboxy-4-methyl-2-oxopentanoate. The product decarboxylates to 4-methyl-2 oxopentanoate. Required during pollen development and involved in embryo sac development. More active on 3-isopropylmalate and NAD(+) than towards D-malate. In Arabidopsis thaliana (Mouse-ear cress), this protein is 3-isopropylmalate dehydrogenase 1, chloroplastic.